Consider the following 402-residue polypeptide: Succinylornithine transaminase (402 aa).

Position 252 is an N6-(pyridoxal phosphate)lysine (K252).

This sequence belongs to the class-III pyridoxal-phosphate-dependent aminotransferase family. AstC subfamily. Pyridoxal 5'-phosphate serves as cofactor.

The catalysed reaction is N(2)-succinyl-L-ornithine + 2-oxoglutarate = N-succinyl-L-glutamate 5-semialdehyde + L-glutamate. It functions in the pathway amino-acid degradation; L-arginine degradation via AST pathway; L-glutamate and succinate from L-arginine: step 3/5. In terms of biological role, catalyzes the transamination of N(2)-succinylornithine and alpha-ketoglutarate into N(2)-succinylglutamate semialdehyde and glutamate. Can also act as an acetylornithine aminotransferase. The chain is Succinylornithine transaminase from Photorhabdus laumondii subsp. laumondii (strain DSM 15139 / CIP 105565 / TT01) (Photorhabdus luminescens subsp. laumondii).